The chain runs to 566 residues: Oxygen-dependent choline dehydrogenase (566 aa).

Position 7 to 36 (7 to 36) interacts with FAD; the sequence is DYIICGAGSAGNVLATRLTEDPNVTVLLLE. Residues 183–203 are disordered; it reads QQEGFGPMDRTVTPKGRRAST. The active-site Proton acceptor is His-474.

It belongs to the GMC oxidoreductase family. FAD is required as a cofactor.

The catalysed reaction is choline + A = betaine aldehyde + AH2. It catalyses the reaction betaine aldehyde + NAD(+) + H2O = glycine betaine + NADH + 2 H(+). Its pathway is amine and polyamine biosynthesis; betaine biosynthesis via choline pathway; betaine aldehyde from choline (cytochrome c reductase route): step 1/1. In terms of biological role, involved in the biosynthesis of the osmoprotectant glycine betaine. Catalyzes the oxidation of choline to betaine aldehyde and betaine aldehyde to glycine betaine at the same rate. The sequence is that of Oxygen-dependent choline dehydrogenase from Burkholderia ambifaria (strain ATCC BAA-244 / DSM 16087 / CCUG 44356 / LMG 19182 / AMMD) (Burkholderia cepacia (strain AMMD)).